Consider the following 343-residue polypeptide: 4-hydroxy-2-oxovalerate aldolase 4 (343 aa).

Residues Val-8 to Thr-260 enclose the Pyruvate carboxyltransferase domain. Arg-16 to Asp-17 is a binding site for substrate. Asp-17 is a Mn(2+) binding site. His-20 acts as the Proton acceptor in catalysis. Substrate is bound by residues Ser-170 and His-199. Mn(2+)-binding residues include His-199 and His-201. Residue Tyr-290 coordinates substrate.

The protein belongs to the 4-hydroxy-2-oxovalerate aldolase family.

The enzyme catalyses (S)-4-hydroxy-2-oxopentanoate = acetaldehyde + pyruvate. This chain is 4-hydroxy-2-oxovalerate aldolase 4, found in Dechloromonas aromatica (strain RCB).